A 764-amino-acid chain; its full sequence is Complement factor B (764 aa).

The N-terminal stretch at 1-25 (MGSNLSPQLCLMPFILGLLSGGVTT) is a signal peptide. Sushi domains are found at residues 35 to 100 (GSCS…ECRA), 101 to 160 (IHCP…ICDN), and 163 to 220 (GYCS…SCQD). 6 disulfides stabilise this stretch: Cys37–Cys76, Cys62–Cys98, Cys103–Cys145, Cys131–Cys158, Cys165–Cys205, and Cys191–Cys218. N-linked (GlcNAc...) asparagine glycosylation is found at Asn122 and Asn142. Positions 270–469 (NIYLVLDGSD…NLEDVFYQMI (200 aa)) constitute a VWFA domain. Mg(2+) contacts are provided by Ser278 and Ser280. Residues Ser278 and Ser280 each coordinate Mn(2+). N-linked (GlcNAc...) asparagine glycosylation occurs at Asn285. Lys291 carries N-linked (Glc) (glycation) lysine glycosylation. Position 353 (Thr353) interacts with Mg(2+). Thr353 contacts Mn(2+). A glycan (N-linked (GlcNAc...) asparagine) is linked at Asn378. The Peptidase S1 domain maps to 477-757 (LCGMVWEHRK…VLPWLKEKLQ (281 aa)). 5 cysteine pairs are disulfide-bonded: Cys478–Cys596, Cys511–Cys527, Cys599–Cys615, Cys656–Cys682, and Cys695–Cys725. Residues His526 and Asp576 each act as charge relay system in the active site. Ser699 (charge relay system) is an active-site residue.

It belongs to the peptidase S1 family. In terms of assembly, monomer. Interacts with complement C3b; this interaction is dependent on the presence of Mg(2+). As to quaternary structure, catalytic component of the C3 convertase of the alternative complement pathway, also named C3bBb, composed of complement factor B Bb and complement C3b. Catalytic component of the C5 convertase of the alternative complement pathway, also named C3bBb3b, composed of complement factor B Bb and additional molecules of complement C3b. Interacts to CFP; this interaction contributes to the stabilization of the active C3-convertase enzyme complex. Mg(2+) serves as cofactor. Mn(2+) is required as a cofactor. Cleaved by CFD following activation of the alternative complement system, generating Ba and Bb chains. Cleavage and activation takes place when CFB is already associated with complement C3b.

Its subcellular location is the secreted. The protein resides in the cell surface. The catalysed reaction is Cleavage of Arg-|-Ser bond in complement component C3 alpha-chain to yield C3a and C3b, and Arg-|-Xaa bond in complement component C5 alpha-chain to yield C5a and C5b.. In terms of biological role, precursor of the catalytic component of the C3 and C5 convertase complexes of the alternative pathway of the complement system, a cascade of proteins that leads to phagocytosis and breakdown of pathogens and signaling that strengthens the adaptive immune system. The alternative complement pathway acts as an amplification loop that enhances other complement pathways (classical, lectin and GZMK) by promoting formation of additional C3 and C5 convertases. CFB is cleaved and activated by CFD to generate Ba and Bb chains; Bb chain constituting the catalytic component of the C3 and C5 convertases. Its function is as follows. Serine protease component of the complement C3 and C5 convertase complexes of the alternative complement pathway. Following cleavage and activation by factor D (CFD), forms the C3 convertase together with complement C3b. As part of the C3 convertase, cleaves and activates C3 into C3a anaphylatoxin and C3b opsonin, the next components of the complement pathways. When an additional complement C3b molecule binds to the C3 convertase, forms the C5 convertase, which cleaves and activates C5 into C5a anaphylatoxin and C5b component of the membrane attack complex. Functionally, involved in proliferation and differentiation of preactivated B-lymphocytes, rapid spreading of peripheral blood monocytes, stimulation of lymphocyte blastogenesis and lysis of erythrocytes. This is Complement factor B from Homo sapiens (Human).